Here is a 654-residue protein sequence, read N- to C-terminus: Protein LYK2 (654 aa).

The first 25 residues, 1–25 (MAVSVSKQYMTSLVVILLFISLSSL), serve as a signal peptide directing secretion. Topologically, residues 26 to 241 (SPTSTSHSCD…PSKKKRSKMK (216 aa)) are extracellular. Disulfide bonds link Cys50–Cys102, Cys57–Cys163, and Cys100–Cys161. Residues Asn103, Asn170, Asn193, and Asn204 are each glycosylated (N-linked (GlcNAc...) asparagine). One copy of the LysM; degenerate repeat lies at 177 to 217 (YPVGVRDSVSSLAVRFNTTEDAIVSANNKSGVVPLKPALIP). The disordered stretch occupies residues 218–238 (LDHKPEKQGSRKRNPSKKKRS). Positions 227 to 238 (SRKRNPSKKKRS) are enriched in basic residues. A helical membrane pass occupies residues 242–262 (LMIAVSSAIAGVCGLVTLMVF). Over 263–654 (GYLHWKKETQ…PLVKKSSIID (392 aa)) the chain is Cytoplasmic. Residues 324-619 (TPRKPVLEIY…EIAERVSRLV (296 aa)) form the Protein kinase domain. Residues 330–338 (LEIYAFEEL) and Lys368 each bind ATP.

This sequence belongs to the protein kinase superfamily. Ser/Thr protein kinase family.

The protein resides in the cell membrane. Functionally, may recognize microbe-derived N-acetylglucosamine (NAG)-containing ligands. This chain is Protein LYK2 (LYK2), found in Arabidopsis thaliana (Mouse-ear cress).